The sequence spans 123 residues: Large ribosomal subunit protein uL14 (123 aa).

The protein belongs to the universal ribosomal protein uL14 family. Part of the 50S ribosomal subunit. Forms a cluster with proteins L3 and L19. In the 70S ribosome, L14 and L19 interact and together make contacts with the 16S rRNA in bridges B5 and B8.

Binds to 23S rRNA. Forms part of two intersubunit bridges in the 70S ribosome. This chain is Large ribosomal subunit protein uL14, found in Sodalis glossinidius (strain morsitans).